The sequence spans 727 residues: Adhesion G protein-coupled receptor L4 (727 aa).

A signal peptide spans Met1 to Phe19. Over Leu20 to Ile467 the chain is Extracellular. Positions Asp52–Glu90 constitute an EGF-like 1; calcium-binding domain. 6 disulfides stabilise this stretch: Cys56/Cys69, Cys63/Cys78, Cys106/Cys118, Cys112/Cys127, Cys408/Cys438, and Cys426/Cys440. The EGF-like 2; calcium-binding domain maps to Asp102–Pro139. Positions Thr282–Asn456 constitute a GAIN-B domain. Residues Cys408–Asn456 are GPS. A helical membrane pass occupies residues Thr468–Phe488. Residues Phe489–Arg496 are Cytoplasmic-facing. Residues Thr497 to Gly517 traverse the membrane as a helical segment. Residues Ile518 to His535 lie on the Extracellular side of the membrane. The chain crosses the membrane as a helical span at residues Tyr536–Val556. Over Val557 to Arg568 the chain is Cytoplasmic. A helical transmembrane segment spans residues Asn569–Gly589. The Extracellular portion of the chain corresponds to Tyr590–Trp609. Residues Ser610–Ile630 traverse the membrane as a helical segment. At Tyr631–Ala654 the chain is on the cytoplasmic side. The helical transmembrane segment at Arg655 to Ile675 threads the bilayer. At Leu676–Thr682 the chain is on the extracellular side. Residues Ala683–Val703 form a helical membrane-spanning segment.

Belongs to the G-protein coupled receptor 2 family. Adhesion G-protein coupled receptor (ADGR) subfamily. In terms of assembly, heterodimer of 2 chains generated by proteolytic processing; the large extracellular N-terminal fragment and the membrane-bound C-terminal fragment predominantly remain associated and non-covalently linked. In terms of processing, autoproteolytically processed at the GPS region of the GAIN-B domain; this cleavage modulates receptor activity.

It is found in the cell membrane. Orphan receptor that plays a role in vessel formation. This Danio rerio (Zebrafish) protein is Adhesion G protein-coupled receptor L4.